The following is a 203-amino-acid chain: Lipoprotein MlpJ (203 aa).

The N-terminal stretch at 1 to 17 (MKIINILFCISLLLLNS) is a signal peptide. The N-palmitoyl cysteine moiety is linked to residue cysteine 18. A lipid anchor (S-diacylglycerol cysteine) is attached at cysteine 18. The segment at 26–47 (LKNNAQQTKSRKKRDLSQEELP) is disordered.

It belongs to the Multicopy lipoprotein (Mlp) family.

Its subcellular location is the cell outer membrane. Its function is as follows. An outer membrane protein that may participate in pathogenesis. Some human Lyme disease patients have antibodies against this protein. The Mlp proteins probably undergo intragenic recombination, generating new alleles. This is Lipoprotein MlpJ from Borreliella burgdorferi (strain ATCC 35210 / DSM 4680 / CIP 102532 / B31) (Borrelia burgdorferi).